Here is a 247-residue protein sequence, read N- to C-terminus: Probable 2-phosphosulfolactate phosphatase (247 aa).

It belongs to the ComB family. Mg(2+) serves as cofactor.

It catalyses the reaction (2R)-O-phospho-3-sulfolactate + H2O = (2R)-3-sulfolactate + phosphate. In Clostridium perfringens (strain SM101 / Type A), this protein is Probable 2-phosphosulfolactate phosphatase.